A 365-amino-acid chain; its full sequence is Parathion hydrolase (365 aa).

Residues M1 to G29 constitute a signal peptide (tat-type signal). Zn(2+) is bound by residues H55, H57, K169, H201, H230, and D301. K169 bears the N6-carboxylysine mark.

This sequence belongs to the metallo-dependent hydrolases superfamily. Phosphotriesterase family. Homodimer. It depends on Zn(2+) as a cofactor. Predicted to be exported by the Tat system. The position of the signal peptide cleavage has been experimentally proven.

It is found in the cell membrane. The enzyme catalyses An aryl dialkyl phosphate + H2O = dialkyl phosphate + an aryl alcohol.. Functionally, has an unusual substrate specificity for synthetic organophosphate triesters and phosphorofluoridates. All of the phosphate triesters found to be substrates are synthetic compounds. The identity of any naturally occurring substrate for the enzyme is unknown. Has no detectable activity with phosphate monoesters or diesters and no activity as an esterase or protease. It catalyzes the hydrolysis of the insecticide paraoxon at a rate approaching the diffusion limit and thus appears to be optimally evolved for utilizing this synthetic substrate. This Brevundimonas diminuta (Pseudomonas diminuta) protein is Parathion hydrolase (opd).